Reading from the N-terminus, the 501-residue chain is Sugar phosphate exchanger 3 (501 aa).

A helical membrane pass occupies residues 20–40 (CTHHHIVVFLLTFFSYSLLHA). N-linked (GlcNAc...) asparagine glycosylation occurs at Asn-62. The next 5 membrane-spanning stretches (helical) occupy residues 87 to 107 (TLFLGTLDTIFLFSYAVGLFV), 119 to 139 (WVLSFGMCSSALVVFFFGTLT), 153 to 173 (LWVVNGLLQSTGWPCVVAVMG), 183 to 203 (FVFGLWSACASVGNILGAFLA), and 214 to 234 (AFLVTASVQFAGGVIVFCGLL). Asn-273 carries N-linked (GlcNAc...) asparagine glycosylation. 6 helical membrane-spanning segments follow: residues 298–320 (GVVLYSLAYACLKLVNYSFFFWL), 340–360 (IWYDVGGIIGGTIQGLISDVL), 364–384 (APVLAISLLFAVGSLFGYSRS), 393–413 (VIMAITGFFIGGPSNMISSAI), 435–455 (GIVDGTGSIGAAVGQYLVSLI), and 459–479 (LGWMWVFYFFILMASSTILFI).

It belongs to the major facilitator superfamily. Organophosphate:Pi antiporter (OPA) (TC 2.A.1.4) family.

The protein localises to the endoplasmic reticulum membrane. It localises to the lysosome membrane. Functionally, unlike the other SLC37 members, seems to lack glucose-6-phosphate antiporter activity. This chain is Sugar phosphate exchanger 3 (SLC37A3), found in Gallus gallus (Chicken).